We begin with the raw amino-acid sequence, 254 residues long: Thiamine thiazole synthase (254 aa).

NAD(+)-binding positions include Ser-36, 55-56 (EK), Gly-63, Val-127, and 154-156 (HVD). Positions 156 and 171 each coordinate Fe cation. Met-219 contacts NAD(+). Arg-229 lines the glycine pocket.

The protein belongs to the THI4 family. As to quaternary structure, homooctamer; tetramer of dimers. Fe(2+) serves as cofactor.

The catalysed reaction is hydrogen sulfide + glycine + NAD(+) = ADP-5-ethyl-4-methylthiazole-2-carboxylate + nicotinamide + 3 H2O + H(+). It participates in cofactor biosynthesis; thiamine diphosphate biosynthesis. Involved in the biosynthesis of the thiazole moiety of thiamine. Catalyzes the conversion of NAD and glycine to adenosine diphosphate 5-(2-hydroxyethyl)-4-methylthiazole-2-carboxylate (ADT), an adenylated thiazole intermediate, using free sulfide as a source of sulfur. This chain is Thiamine thiazole synthase, found in Methanoculleus marisnigri (strain ATCC 35101 / DSM 1498 / JR1).